The chain runs to 288 residues: Elongation factor Ts (288 aa).

Residues 82 to 85 form an involved in Mg(2+) ion dislocation from EF-Tu region; sequence TDFV.

Belongs to the EF-Ts family.

The protein localises to the cytoplasm. Associates with the EF-Tu.GDP complex and induces the exchange of GDP to GTP. It remains bound to the aminoacyl-tRNA.EF-Tu.GTP complex up to the GTP hydrolysis stage on the ribosome. The sequence is that of Elongation factor Ts from Chlorobaculum tepidum (strain ATCC 49652 / DSM 12025 / NBRC 103806 / TLS) (Chlorobium tepidum).